The sequence spans 258 residues: UPF0246 protein YaaA (258 aa).

The protein belongs to the UPF0246 family.

This chain is UPF0246 protein YaaA, found in Escherichia coli O45:K1 (strain S88 / ExPEC).